The following is a 205-amino-acid chain: MAVRVKICGITRVDDLHAACDAGADALGFVFYEKSPRHLTLDAAAALLREVPPFVQTVGLFVDANPAFVDSVLRAVPLDLLQFHGDEKPADCARHGRPWIKAIRVRADTDLLKCAADFAAASGLLLDAYVPGVPGGTGARFDWRLIPPRLPQRVILSGGLTPDNVADAVRRVRPWAVDVSSGVEAAKGIKDAQKIARFISQAKAS.

This sequence belongs to the TrpF family.

It carries out the reaction N-(5-phospho-beta-D-ribosyl)anthranilate = 1-(2-carboxyphenylamino)-1-deoxy-D-ribulose 5-phosphate. Its pathway is amino-acid biosynthesis; L-tryptophan biosynthesis; L-tryptophan from chorismate: step 3/5. This is N-(5'-phosphoribosyl)anthranilate isomerase from Thiobacillus denitrificans (strain ATCC 25259 / T1).